The chain runs to 228 residues: NAD(P)H-hydrate epimerase (228 aa).

Residues 9–215 form the YjeF N-terminal domain; that stretch reads AISIDEELFN…RLEEKYSLEL (207 aa). (6S)-NADPHX is bound at residue 58-62; that stretch reads NNGGD. Asn-59 and Asp-123 together coordinate K(+). (6S)-NADPHX-binding positions include 127–133 and Asp-156; that span reads GFSFKPP. Residue Ser-159 participates in K(+) binding.

It belongs to the NnrE/AIBP family. The cofactor is K(+).

The enzyme catalyses (6R)-NADHX = (6S)-NADHX. It catalyses the reaction (6R)-NADPHX = (6S)-NADPHX. Catalyzes the epimerization of the S- and R-forms of NAD(P)HX, a damaged form of NAD(P)H that is a result of enzymatic or heat-dependent hydration. This is a prerequisite for the S-specific NAD(P)H-hydrate dehydratase to allow the repair of both epimers of NAD(P)HX. This is NAD(P)H-hydrate epimerase from Anopheles darlingi (Mosquito).